Reading from the N-terminus, the 952-residue chain is Substrate-adhesion molecule (952 aa).

A signal peptide spans 1–25 (MKSQKIGSMILLIGILLAIFNFAYS). The Extracellular segment spans residues 26 to 527 (DDDIERFSIN…TWFFDTNVET (502 aa)). Asparagine 78, asparagine 182, asparagine 231, asparagine 243, and asparagine 412 each carry an N-linked (GlcNAc...) asparagine glycan. Positions 438 to 471 (EIRRCKDSCNGYGTCNTANYTCVCDSAHMGETCN) constitute an EGF-like domain. 3 disulfide bridges follow: cysteine 442-cysteine 452, cysteine 446-cysteine 459, and cysteine 461-cysteine 470. N-linked (GlcNAc...) asparagine glycosylation is present at asparagine 456. The chain crosses the membrane as a helical span at residues 528-548 (GVIALACIFIAFVGILYIIDI). At 549-591 (GTTVPIDIKRAKDYAEENKSGQFPKATHEEASVLWWRDQRSHK) the chain is on the cytoplasmic side. A helical transmembrane segment spans residues 592-612 (AWTFMDQFQLISLVSHIGVVF). At 613–678 (PSRFISFTEY…GDLYLLPNIL (66 aa)) the chain is on the extracellular side. The helical transmembrane segment at 679–699 (FWFGLLLGVFLVPLLLAYAII) threads the bilayer. Residues 700–722 (SFMESLIHWKEVVTNRLIHVLVR) are Cytoplasmic-facing. A helical transmembrane segment spans residues 723–743 (ILTFGYIGVLIAASFAMVTPL). Topologically, residues 744–752 (HDYRIIIPG) are extracellular. The helical transmembrane segment at 753–773 (AIIFVLYGIGLPIAIWFLLAV) threads the bilayer. Over 774 to 801 (PEARLHNPTFKQRFGCLYVHYKPKTDHR) the chain is Cytoplasmic. Residues 802 to 822 (FVVFMFIKRFIMAVIIGILSF) form a helical membrane-spanning segment. Residues 823–837 (KPMTNYPLTGTDLAV) are Extracellular-facing. The helical transmembrane segment at 838 to 858 (PIVQVVVIDIALIGYAVLLFI) threads the bilayer. The Cytoplasmic portion of the chain corresponds to 859-868 (RKPYFDHYQL). A helical transmembrane segment spans residues 869-889 (WLEYLLTAINIVTVSLSLTHI). Residues 890 to 897 (KSPSAAGE) are Extracellular-facing. The chain crosses the membrane as a helical span at residues 898-918 (LIACLIQALALVACIAAYVVA). The Cytoplasmic portion of the chain corresponds to 919–952 (WLQMRSSFIKKVKKYLCCCCKSSKSSGEIDLSKK).

The protein localises to the cell membrane. Its function is as follows. Involved in substrate adhesion, myosin-independent cytokinesis, organization of actin cytoskeleton, and phagocytosis. In Dictyostelium discoideum (Social amoeba), this protein is Substrate-adhesion molecule (sadA).